Consider the following 71-residue polypeptide: Small ribosomal subunit protein bS21 (71 aa).

Residues 48-59 show a composition bias toward basic residues; it reads KAAAAVKRHAKK. Residues 48–71 are disordered; sequence KAAAAVKRHAKKVQRENRKFQRLY. The span at 60 to 71 shows a compositional bias: basic and acidic residues; sequence VQRENRKFQRLY.

It belongs to the bacterial ribosomal protein bS21 family.

The protein is Small ribosomal subunit protein bS21 of Saccharophagus degradans (strain 2-40 / ATCC 43961 / DSM 17024).